The following is a 640-amino-acid chain: Chaperone protein HtpG (640 aa).

The segment at 1-348 (MADVAHQETH…SNDLPLNVSR (348 aa)) is a; substrate-binding. The interval 349 to 565 (EILQDNKITQ…GTGMSTQMIK (217 aa)) is b. The tract at residues 566-640 (LMQAAGQPVP…LNTLLMNLAK (75 aa)) is c.

This sequence belongs to the heat shock protein 90 family. Homodimer.

The protein resides in the cytoplasm. In terms of biological role, molecular chaperone. Has ATPase activity. In Pseudoalteromonas atlantica (strain T6c / ATCC BAA-1087), this protein is Chaperone protein HtpG.